The following is a 337-amino-acid chain: Holliday junction branch migration complex subunit RuvB (337 aa).

The large ATPase domain (RuvB-L) stretch occupies residues 1-180 (MTRLISADKS…FGVISRLEFY (180 aa)). Residues leucine 19, arginine 20, glycine 61, lysine 64, threonine 65, threonine 66, 127 to 129 (EDF), arginine 170, tyrosine 180, and arginine 217 each bind ATP. Threonine 65 contributes to the Mg(2+) binding site. The small ATPAse domain (RuvB-S) stretch occupies residues 181–251 (THDELAFIIT…VADQALALLE (71 aa)). The head domain (RuvB-H) stretch occupies residues 254–337 (EMGFDMMDRA…APEPPQGKLF (84 aa)). Positions 309 and 314 each coordinate DNA.

The protein belongs to the RuvB family. As to quaternary structure, homohexamer. Forms an RuvA(8)-RuvB(12)-Holliday junction (HJ) complex. HJ DNA is sandwiched between 2 RuvA tetramers; dsDNA enters through RuvA and exits via RuvB. An RuvB hexamer assembles on each DNA strand where it exits the tetramer. Each RuvB hexamer is contacted by two RuvA subunits (via domain III) on 2 adjacent RuvB subunits; this complex drives branch migration. In the full resolvosome a probable DNA-RuvA(4)-RuvB(12)-RuvC(2) complex forms which resolves the HJ.

It is found in the cytoplasm. The enzyme catalyses ATP + H2O = ADP + phosphate + H(+). The RuvA-RuvB-RuvC complex processes Holliday junction (HJ) DNA during genetic recombination and DNA repair, while the RuvA-RuvB complex plays an important role in the rescue of blocked DNA replication forks via replication fork reversal (RFR). RuvA specifically binds to HJ cruciform DNA, conferring on it an open structure. The RuvB hexamer acts as an ATP-dependent pump, pulling dsDNA into and through the RuvAB complex. RuvB forms 2 homohexamers on either side of HJ DNA bound by 1 or 2 RuvA tetramers; 4 subunits per hexamer contact DNA at a time. Coordinated motions by a converter formed by DNA-disengaged RuvB subunits stimulates ATP hydrolysis and nucleotide exchange. Immobilization of the converter enables RuvB to convert the ATP-contained energy into a lever motion, pulling 2 nucleotides of DNA out of the RuvA tetramer per ATP hydrolyzed, thus driving DNA branch migration. The RuvB motors rotate together with the DNA substrate, which together with the progressing nucleotide cycle form the mechanistic basis for DNA recombination by continuous HJ branch migration. Branch migration allows RuvC to scan DNA until it finds its consensus sequence, where it cleaves and resolves cruciform DNA. The protein is Holliday junction branch migration complex subunit RuvB of Geobacter sp. (strain M21).